A 306-amino-acid chain; its full sequence is Ribosomal protein L11 methyltransferase (306 aa).

S-adenosyl-L-methionine contacts are provided by T139, G173, D195, and N242.

Belongs to the methyltransferase superfamily. PrmA family.

It is found in the cytoplasm. It carries out the reaction L-lysyl-[protein] + 3 S-adenosyl-L-methionine = N(6),N(6),N(6)-trimethyl-L-lysyl-[protein] + 3 S-adenosyl-L-homocysteine + 3 H(+). Methylates ribosomal protein L11. In Nostoc sp. (strain PCC 7120 / SAG 25.82 / UTEX 2576), this protein is Ribosomal protein L11 methyltransferase.